The following is a 581-amino-acid chain: Pre-mRNA 3'-end-processing factor FIP1 (581 aa).

Basic and acidic residues-rich tracts occupy residues 1–10 (MSAGEVERLV) and 32–42 (VHVHSDLAKDL). Disordered stretches follow at residues 1 to 95 (MSAG…EDDV), 211 to 282 (TVQQ…ESPD), and 320 to 581 (RSAT…APAE). Residues 1–110 (MSAGEVERLV…DIKTGAPQYG (110 aa)) are sufficient for interaction with PAPOLA. Residues 1–332 (MSAGEVERLV…TEVDNNFSKP (332 aa)) form a necessary for stimulating PAPOLA activity region. 2 stretches are compositionally biased toward acidic residues: residues 43–54 (DENEVERPEEEN) and 80–94 (TEDD…DEDD). 3 positions are modified to phosphoserine: serine 84, serine 86, and serine 88. Residues 136–219 (KGVDLDAPGS…ITVQQGRTGN (84 aa)) form a sufficient for interaction with CPSF4 region. Over residues 247–267 (SRNSTSSQSQTSTASRKASSS) the composition is skewed to low complexity. Residues 271 to 282 (WQDRYGRAESPD) are compositionally biased toward basic and acidic residues. Serine 280 carries the phosphoserine modification. Polar residues predominate over residues 320-330 (RSATEVDNNFS). Positions 331–389 (KPPPFFPPGAPPTHLPPPPFLPPPPTVSTAPPLIPPPGIPITVPPPGFPPPPGAPPPSL) are enriched in pro residues. At tyrosine 411 the chain carries Phosphotyrosine. The span at 419–435 (LTSSAPSWPSLVDTTKQ) shows a compositional bias: polar residues. Residues 428–581 (SLVDTTKQWD…QESTEAAPAE (154 aa)) form a sufficient for interaction with CPSF1 and CSTF3 region. Basic and acidic residues predominate over residues 439–479 (YARREKDRDRDRERDRDRERERDRDRERERTRERERERDHS). Positions 442 to 477 (REKDRDRDRERDRDRERERDRDRERERTRERERERD) are arg/Asp/Glu-rich domain. Residues 478-535 (HSPTPSVFNSDEERYRYREYAERGYERHRASREKEERHRERRHREKEETRHKSSRSNS) form a sufficient for interaction with AHCYL1 region. Position 479 is a phosphoserine (serine 479). Threonine 481 carries the post-translational modification Phosphothreonine. Residues serine 483 and serine 487 each carry the phosphoserine modification. The span at 488-515 (DEERYRYREYAERGYERHRASREKEERH) shows a compositional bias: basic and acidic residues. The span at 529-538 (KSSRSNSRRR) shows a compositional bias: basic residues. Phosphoserine is present on serine 541. Over residues 547 to 557 (HRRHKHKKSKR) the composition is skewed to basic residues.

It belongs to the FIP1 family. Component of the cleavage and polyadenylation specificity factor (CPSF) complex, composed of CPSF1, CPSF2, CPSF3, CPSF4 and FIP1L1. Found in a complex with CPSF1, FIP1L1 and PAPOLA. Interacts with CPSF1, CPSF4, CSTF2 and CSTF3. Interacts with AHCYL1 (when phosphorylated); the interaction is direct and associates AHCYL1 with the CPSF complex and RNA. Interacts with PAPOLA; the interaction seems to be increased by the interaction with AHCYL1. Interacts with NUDT21/CPSF5; this interaction occurs in a RNA sequence-specific manner. Interacts (preferentially via unphosphorylated form and Arg/Glu/Asp-rich domain) with CPSF6 (via Arg/Ser-rich domain); this interaction mediates, at least in part, the interaction between the CFIm and CPSF complexes and may be inhibited by CPSF6 hyper-phosphorylation. Interacts (preferentially via unphosphorylated form and Arg/Asp/Glu-rich domain) with CPSF7 (via Arg/Ser-rich domain); this interaction mediates, at least in part, the interaction between the CFIm and CPSF complexes and may be inhibited by CPSF7 hyper-phosphorylation.

It is found in the nucleus. In terms of biological role, component of the cleavage and polyadenylation specificity factor (CPSF) complex that plays a key role in pre-mRNA 3'-end formation, recognizing the AAUAAA signal sequence and interacting with poly(A) polymerase and other factors to bring about cleavage and poly(A) addition. FIP1L1 contributes to poly(A) site recognition and stimulates poly(A) addition. Binds to U-rich RNA sequence elements surrounding the poly(A) site. May act to tether poly(A) polymerase to the CPSF complex. The chain is Pre-mRNA 3'-end-processing factor FIP1 (Fip1l1) from Mus musculus (Mouse).